The sequence spans 379 residues: Succinyl-diaminopimelate desuccinylase (379 aa).

His-68 contacts Zn(2+). The active site involves Asp-70. Asp-101 is a binding site for Zn(2+). Residue Glu-135 is the Proton acceptor of the active site. The Zn(2+) site is built by Glu-136, Glu-164, and His-350.

Belongs to the peptidase M20A family. DapE subfamily. Homodimer. Zn(2+) serves as cofactor. It depends on Co(2+) as a cofactor.

It carries out the reaction N-succinyl-(2S,6S)-2,6-diaminopimelate + H2O = (2S,6S)-2,6-diaminopimelate + succinate. It functions in the pathway amino-acid biosynthesis; L-lysine biosynthesis via DAP pathway; LL-2,6-diaminopimelate from (S)-tetrahydrodipicolinate (succinylase route): step 3/3. Its function is as follows. Catalyzes the hydrolysis of N-succinyl-L,L-diaminopimelic acid (SDAP), forming succinate and LL-2,6-diaminopimelate (DAP), an intermediate involved in the bacterial biosynthesis of lysine and meso-diaminopimelic acid, an essential component of bacterial cell walls. The chain is Succinyl-diaminopimelate desuccinylase from Bordetella bronchiseptica (strain ATCC BAA-588 / NCTC 13252 / RB50) (Alcaligenes bronchisepticus).